We begin with the raw amino-acid sequence, 272 residues long: SWIRM domain-containing protein laf2 (272 aa).

A disordered region spans residues 86-148 (HVGRWANRHS…RRRKSARGNG (63 aa)). Composition is skewed to low complexity over residues 95-120 (SNVSSSSGSRGRSSVSSRDSSPSYSG) and 127-136 (RSISSSPSTI). Ser-130 and Ser-132 each carry phosphoserine. Thr-135 carries the post-translational modification Phosphothreonine. The SWIRM domain occupies 182 to 272 (LKAEWKGPPL…AFHEVGFFDD (91 aa)).

In terms of assembly, component of the RPD3C(L) complex.

It is found in the nucleus. In terms of biological role, component of the RPD3C(L) histone deacetylase complex (HDAC) responsible for the deacetylation of lysine residues on the N-terminal part of the core histones (H2A, H2B, H3 and H4). Histone deacetylation gives a tag for epigenetic repression and plays an important role in transcriptional regulation, cell cycle progression and developmental events. The sequence is that of SWIRM domain-containing protein laf2 (laf2) from Schizosaccharomyces pombe (strain 972 / ATCC 24843) (Fission yeast).